A 307-amino-acid polypeptide reads, in one-letter code: Fructokinase (307 aa).

Belongs to the carbohydrate kinase PfkB family.

The catalysed reaction is D-fructose + ATP = D-fructose 6-phosphate + ADP + H(+). This is Fructokinase (scrK) from Vibrio alginolyticus.